We begin with the raw amino-acid sequence, 1432 residues long: Gag-Pol polyprotein (1432 aa).

Residue Gly-2 is the site of N-myristoyl glycine; by host attachment. Positions Ile-7–Ile-31 are interaction with Gp41. Positions Leu-8–Arg-43 are interaction with host CALM1. Residues Lys-12–Ile-19 are interaction with host AP3D1. The tract at residues Asp-14–His-33 is interaction with membrane phosphatidylinositol 4,5-bisphosphate and RNA. Positions Trp-16–Arg-22 match the Nuclear export signal motif. The Nuclear localization signal signature appears at Lys-26–Lys-32. Residues Glu-73–Ser-77 are interaction with membrane phosphatidylinositol 4,5-bisphosphate. The residue at position 132 (Tyr-132) is a Phosphotyrosine; by host. The segment at Asn-189–Gln-227 is interaction with human PPIA/CYPA and NUP153. The interval Tyr-277 to Leu-363 is dimerization/Multimerization of capsid protein p24. 2 CCHC-type zinc fingers span residues Val-389–Ala-406 and Lys-410–Glu-427. Residues Glu-443–Ser-482 form a disordered region. The segment covering Pro-449–Ser-459 has biased composition (polar residues). Residues Arg-460–Pro-469 show a composition bias toward basic and acidic residues. The interval Pro-486–Leu-490 is dimerization of protease. In terms of domain architecture, Peptidase A2 spans Arg-505–Met-574. Catalysis depends on Asp-510, which acts as the For protease activity; shared with dimeric partner. Dimerization of protease stretches follow at residues Gly-534–Lys-540 and Asn-573–Pro-585. The region spanning Glu-628–Leu-818 is the Reverse transcriptase domain. Mg(2+) contacts are provided by Asp-694, Asp-769, and Asp-770. An RT 'primer grip' region spans residues Phe-811–His-819. The Tryptophan repeat motif motif lies at Trp-982 to Trp-998. The RNase H type-1 domain maps to Ile-1018–Arg-1141. Residues Asp-1027, Glu-1062, Asp-1082, and Asp-1133 each contribute to the Mg(2+) site. The Integrase-type zinc-finger motif lies at Asp-1147–Gln-1188. The Zn(2+) site is built by His-1156, His-1160, Cys-1184, and Cys-1187. An Integrase catalytic domain is found at Val-1198–Ile-1348. Residues Asp-1208, Asp-1260, and Glu-1296 each contribute to the Mg(2+) site. The integrase-type DNA-binding region spans Phe-1367–Asp-1414.

Homotrimer; further assembles as hexamers of trimers. Interacts with gp41 (via C-terminus). Interacts with host CALM1; this interaction induces a conformational change in the Matrix protein, triggering exposure of the myristate group. Interacts with host AP3D1; this interaction allows the polyprotein trafficking to multivesicular bodies during virus assembly. Part of the pre-integration complex (PIC) which is composed of viral genome, matrix protein, Vpr and integrase. As to quaternary structure, homodimer; the homodimer further multimerizes as homohexamers or homopentamers. Interacts with human PPIA/CYPA; This interaction stabilizes the capsid. Interacts with human NUP153. Interacts with host PDZD8; this interaction stabilizes the capsid. Interacts with monkey TRIM5; this interaction destabilizes the capsid. In terms of assembly, homodimer, whose active site consists of two apposed aspartic acid residues. Heterodimer of p66 RT and p51 RT (RT p66/p51). Heterodimerization of RT is essential for DNA polymerase activity. The overall folding of the subdomains is similar in p66 RT and p51 RT but the spatial arrangements of the subdomains are dramatically different. As to quaternary structure, homotetramer; may further associate as a homohexadecamer. Part of the pre-integration complex (PIC) which is composed of viral genome, matrix protein, Vpr and integrase. Interacts with human SMARCB1/INI1 and human PSIP1/LEDGF isoform 1. Interacts with human KPNA3; this interaction might play a role in nuclear import of the pre-integration complex. Interacts with human NUP153; this interaction might play a role in nuclear import of the pre-integration complex. Mg(2+) serves as cofactor. Specific enzymatic cleavages by the viral protease yield mature proteins. The protease is released by autocatalytic cleavage. The polyprotein is cleaved during and after budding, this process is termed maturation. Proteolytic cleavage of p66 RT removes the RNase H domain to yield the p51 RT subunit. Nucleocapsid protein p7 might be further cleaved after virus entry. Post-translationally, tyrosine phosphorylated presumably in the virion by a host kinase. Phosphorylation is apparently not a major regulator of membrane association. In terms of processing, phosphorylated possibly by host MAPK1; this phosphorylation is necessary for Pin1-mediated virion uncoating. Methylated by host PRMT6, impairing its function by reducing RNA annealing and the initiation of reverse transcription.

The protein resides in the host cell membrane. The protein localises to the host endosome. Its subcellular location is the host multivesicular body. It localises to the virion membrane. It is found in the host nucleus. The protein resides in the host cytoplasm. The protein localises to the virion. It catalyses the reaction Specific for a P1 residue that is hydrophobic, and P1' variable, but often Pro.. It carries out the reaction Endohydrolysis of RNA in RNA/DNA hybrids. Three different cleavage modes: 1. sequence-specific internal cleavage of RNA. Human immunodeficiency virus type 1 and Moloney murine leukemia virus enzymes prefer to cleave the RNA strand one nucleotide away from the RNA-DNA junction. 2. RNA 5'-end directed cleavage 13-19 nucleotides from the RNA end. 3. DNA 3'-end directed cleavage 15-20 nucleotides away from the primer terminus.. The catalysed reaction is 3'-end directed exonucleolytic cleavage of viral RNA-DNA hybrid.. The enzyme catalyses DNA(n) + a 2'-deoxyribonucleoside 5'-triphosphate = DNA(n+1) + diphosphate. Its activity is regulated as follows. Protease: The viral protease is inhibited by many synthetic protease inhibitors (PIs), such as amprenavir, atazanavir, indinavir, loprinavir, nelfinavir, ritonavir and saquinavir. Use of protease inhibitors in tritherapy regimens permit more ambitious therapeutic strategies. Reverse transcriptase/ribonuclease H: RT can be inhibited either by nucleoside RT inhibitors (NRTIs) or by non nucleoside RT inhibitors (NNRTIs). NRTIs act as chain terminators, whereas NNRTIs inhibit DNA polymerization by binding a small hydrophobic pocket near the RT active site and inducing an allosteric change in this region. Classical NRTIs are abacavir, adefovir (PMEA), didanosine (ddI), lamivudine (3TC), stavudine (d4T), tenofovir (PMPA), zalcitabine (ddC), and zidovudine (AZT). Classical NNRTIs are atevirdine (BHAP U-87201E), delavirdine, efavirenz (DMP-266), emivirine (I-EBU), and nevirapine (BI-RG-587). The tritherapies used as a basic effective treatment of AIDS associate two NRTIs and one NNRTI. Mediates, with Gag polyprotein, the essential events in virion assembly, including binding the plasma membrane, making the protein-protein interactions necessary to create spherical particles, recruiting the viral Env proteins, and packaging the genomic RNA via direct interactions with the RNA packaging sequence (Psi). Gag-Pol polyprotein may regulate its own translation, by the binding genomic RNA in the 5'-UTR. At low concentration, the polyprotein would promote translation, whereas at high concentration, the polyprotein would encapsidate genomic RNA and then shut off translation. In terms of biological role, targets the polyprotein to the plasma membrane via a multipartite membrane-binding signal, that includes its myristoylated N-terminus. Matrix protein is part of the pre-integration complex. Implicated in the release from host cell mediated by Vpu. Binds to RNA. Functionally, forms the conical core that encapsulates the genomic RNA-nucleocapsid complex in the virion. Most core are conical, with only 7% tubular. The core is constituted by capsid protein hexamer subunits. The core is disassembled soon after virion entry. Host restriction factors such as TRIM5-alpha or TRIMCyp bind retroviral capsids and cause premature capsid disassembly, leading to blocks in reverse transcription. Capsid restriction by TRIM5 is one of the factors which restricts HIV-1 to the human species. Host PIN1 apparently facilitates the virion uncoating. On the other hand, interactions with PDZD8 or CYPA stabilize the capsid. Its function is as follows. Encapsulates and protects viral dimeric unspliced genomic RNA (gRNA). Binds these RNAs through its zinc fingers. Acts as a nucleic acid chaperone which is involved in rearangement of nucleic acid secondary structure during gRNA retrotranscription. Also facilitates template switch leading to recombination. As part of the polyprotein, participates in gRNA dimerization, packaging, tRNA incorporation and virion assembly. Aspartyl protease that mediates proteolytic cleavages of Gag and Gag-Pol polyproteins during or shortly after the release of the virion from the plasma membrane. Cleavages take place as an ordered, step-wise cascade to yield mature proteins. This process is called maturation. Displays maximal activity during the budding process just prior to particle release from the cell. Also cleaves Nef and Vif, probably concomitantly with viral structural proteins on maturation of virus particles. Hydrolyzes host EIF4GI and PABP1 in order to shut off the capped cellular mRNA translation. The resulting inhibition of cellular protein synthesis serves to ensure maximal viral gene expression and to evade host immune response. Also mediates cleavage of host YTHDF3. Mediates cleavage of host CARD8, thereby activating the CARD8 inflammasome, leading to the clearance of latent HIV-1 in patient CD4(+) T-cells after viral reactivation; in contrast, HIV-1 can evade CARD8-sensing when its protease remains inactive in infected cells prior to viral budding. In terms of biological role, multifunctional enzyme that converts the viral RNA genome into dsDNA in the cytoplasm, shortly after virus entry into the cell. This enzyme displays a DNA polymerase activity that can copy either DNA or RNA templates, and a ribonuclease H (RNase H) activity that cleaves the RNA strand of RNA-DNA heteroduplexes in a partially processive 3' to 5' endonucleasic mode. Conversion of viral genomic RNA into dsDNA requires many steps. A tRNA(3)-Lys binds to the primer-binding site (PBS) situated at the 5'-end of the viral RNA. RT uses the 3' end of the tRNA primer to perform a short round of RNA-dependent minus-strand DNA synthesis. The reading proceeds through the U5 region and ends after the repeated (R) region which is present at both ends of viral RNA. The portion of the RNA-DNA heteroduplex is digested by the RNase H, resulting in a ssDNA product attached to the tRNA primer. This ssDNA/tRNA hybridizes with the identical R region situated at the 3' end of viral RNA. This template exchange, known as minus-strand DNA strong stop transfer, can be either intra- or intermolecular. RT uses the 3' end of this newly synthesized short ssDNA to perform the RNA-dependent minus-strand DNA synthesis of the whole template. RNase H digests the RNA template except for two polypurine tracts (PPTs) situated at the 5'-end and near the center of the genome. It is not clear if both polymerase and RNase H activities are simultaneous. RNase H probably can proceed both in a polymerase-dependent (RNA cut into small fragments by the same RT performing DNA synthesis) and a polymerase-independent mode (cleavage of remaining RNA fragments by free RTs). Secondly, RT performs DNA-directed plus-strand DNA synthesis using the PPTs that have not been removed by RNase H as primers. PPTs and tRNA primers are then removed by RNase H. The 3' and 5' ssDNA PBS regions hybridize to form a circular dsDNA intermediate. Strand displacement synthesis by RT to the PBS and PPT ends produces a blunt ended, linear dsDNA copy of the viral genome that includes long terminal repeats (LTRs) at both ends. Functionally, catalyzes viral DNA integration into the host chromosome, by performing a series of DNA cutting and joining reactions. This enzyme activity takes place after virion entry into a cell and reverse transcription of the RNA genome in dsDNA. The first step in the integration process is 3' processing. This step requires a complex comprising the viral genome, matrix protein, Vpr and integrase. This complex is called the pre-integration complex (PIC). The integrase protein removes 2 nucleotides from each 3' end of the viral DNA, leaving recessed CA OH's at the 3' ends. In the second step, the PIC enters cell nucleus. This process is mediated through integrase and Vpr proteins, and allows the virus to infect a non dividing cell. This ability to enter the nucleus is specific of lentiviruses, other retroviruses cannot and rely on cell division to access cell chromosomes. In the third step, termed strand transfer, the integrase protein joins the previously processed 3' ends to the 5' ends of strands of target cellular DNA at the site of integration. The 5'-ends are produced by integrase-catalyzed staggered cuts, 5 bp apart. A Y-shaped, gapped, recombination intermediate results, with the 5'-ends of the viral DNA strands and the 3' ends of target DNA strands remaining unjoined, flanking a gap of 5 bp. The last step is viral DNA integration into host chromosome. This involves host DNA repair synthesis in which the 5 bp gaps between the unjoined strands are filled in and then ligated. Since this process occurs at both cuts flanking the HIV genome, a 5 bp duplication of host DNA is produced at the ends of HIV-1 integration. Alternatively, Integrase may catalyze the excision of viral DNA just after strand transfer, this is termed disintegration. The sequence is that of Gag-Pol polyprotein (gag-pol) from Homo sapiens (Human).